The sequence spans 314 residues: 2-desacetyl-2-hydroxyethyl bacteriochlorophyllide A dehydrogenase (314 aa).

Its pathway is porphyrin-containing compound metabolism; bacteriochlorophyll biosynthesis (light-independent). Its function is as follows. This protein catalyzes the penultimate step in bacteriochlorophyll a biosynthesis. The sequence is that of 2-desacetyl-2-hydroxyethyl bacteriochlorophyllide A dehydrogenase (bchC) from Rhodobacter capsulatus (strain ATCC BAA-309 / NBRC 16581 / SB1003).